Here is a 230-residue protein sequence, read N- to C-terminus: tRNA (cytidine-2'-O-)-methyltransferase TrmJ (230 aa).

S-adenosyl-L-methionine-binding positions include threonine 79–glycine 81, glycine 115, isoleucine 135, and proline 142–methionine 144.

The protein belongs to the class IV-like SAM-binding methyltransferase superfamily. RNA methyltransferase TrmH family. As to quaternary structure, homodimer.

It localises to the cytoplasm. The catalysed reaction is cytidine(32) in tRNA + S-adenosyl-L-methionine = 2'-O-methylcytidine(32) in tRNA + S-adenosyl-L-homocysteine + H(+). Functionally, catalyzes the formation of 2'O-methylated cytidine (Cm32) at position 32 in tRNA. This Methanocaldococcus jannaschii (strain ATCC 43067 / DSM 2661 / JAL-1 / JCM 10045 / NBRC 100440) (Methanococcus jannaschii) protein is tRNA (cytidine-2'-O-)-methyltransferase TrmJ.